The sequence spans 201 residues: MPIGVPRVPFRLPGEEEAVWVDVYNRLYRERLLFLGQNVDDEIANQLIGIMIYLNGEDESKDMYMYINSPGGAVLAGISVYDAMQFVVPDVHTICMGLAASMGSFILTGGEITKRIALPHARVMIHQPASSYYDGQAGECMMEAEEVLKLRDCITKVYVQRTGKPAWLISEDMERDVFMSAKEAQEYGIVDLVASDTNSTT.

Serine 101 (nucleophile) is an active-site residue. Histidine 126 is an active-site residue.

It belongs to the peptidase S14 family. In terms of assembly, component of the chloroplastic Clp protease core complex.

Its subcellular location is the plastid. The protein localises to the chloroplast stroma. The enzyme catalyses Hydrolysis of proteins to small peptides in the presence of ATP and magnesium. alpha-casein is the usual test substrate. In the absence of ATP, only oligopeptides shorter than five residues are hydrolyzed (such as succinyl-Leu-Tyr-|-NHMec, and Leu-Tyr-Leu-|-Tyr-Trp, in which cleavage of the -Tyr-|-Leu- and -Tyr-|-Trp bonds also occurs).. Its function is as follows. Cleaves peptides in various proteins in a process that requires ATP hydrolysis. Has a chymotrypsin-like activity. Plays a major role in the degradation of misfolded proteins. This is ATP-dependent Clp protease proteolytic subunit from Staurastrum punctulatum (Green alga).